The following is a 149-amino-acid chain: Large ribosomal subunit protein uL13 (149 aa).

It belongs to the universal ribosomal protein uL13 family. Part of the 50S ribosomal subunit.

Functionally, this protein is one of the early assembly proteins of the 50S ribosomal subunit, although it is not seen to bind rRNA by itself. It is important during the early stages of 50S assembly. This Borrelia recurrentis (strain A1) protein is Large ribosomal subunit protein uL13.